A 373-amino-acid chain; its full sequence is Putative glutamate--cysteine ligase 2-1 (373 aa).

It belongs to the glutamate--cysteine ligase type 2 family. YbdK subfamily.

The catalysed reaction is L-cysteine + L-glutamate + ATP = gamma-L-glutamyl-L-cysteine + ADP + phosphate + H(+). In terms of biological role, ATP-dependent carboxylate-amine ligase which exhibits weak glutamate--cysteine ligase activity. This is Putative glutamate--cysteine ligase 2-1 from Legionella pneumophila (strain Lens).